We begin with the raw amino-acid sequence, 211 residues long: Tudor-interacting repair regulator protein (211 aa).

Glycyl lysine isopeptide (Lys-Gly) (interchain with G-Cter in ubiquitin) cross-links involve residues K10 and K151. Residues 118–205 (TLEQLHAVEI…TEKQKKALEK (88 aa)) are interaction with PXN.

This sequence belongs to the Nudix hydrolase family. TIRR subfamily. As to quaternary structure, homodimer. Interacts with TP53BP1 (via the Tudor-like domain); interaction is abolished following DNA damage and TP53BP1 phosphorylation by ATM. Interacts (via the cytoplasmic part) with SDC4. Interacts with TGFB1I1 and PXN.

It is found in the nucleus. Key regulator of TP53BP1 required to stabilize TP53BP1 and regulate its recruitment to chromatin. In absence of DNA damage, interacts with the tandem Tudor-like domain of TP53BP1, masking the region that binds histone H4 dimethylated at 'Lys-20' (H4K20me2), thereby preventing TP53BP1 recruitment to chromatin and maintaining TP53BP1 localization to the nucleus. Following DNA damage, ATM-induced phosphorylation of TP53BP1 and subsequent recruitment of RIF1 leads to dissociate NUDT16L1/TIRR from TP53BP1, unmasking the tandem Tudor-like domain and allowing recruitment of TP53BP1 to DNA double strand breaks (DSBs). Binds U8 snoRNA. This chain is Tudor-interacting repair regulator protein, found in Mus musculus (Mouse).